Reading from the N-terminus, the 299-residue chain is Lymphocyte antigen 6 complex locus protein G6f (299 aa).

The first 19 residues, 1–19 (MAVLFLLLLFLCGLPQAET), serve as a signal peptide directing secretion. Residues 20–124 (DSIQAIYVVL…YRYQNWRVYD (105 aa)) form the Ig-like V-type domain. At 20–237 (DSIQAIYVVL…APSADWDVAW (218 aa)) the chain is on the extracellular side. A disulfide bond links C37 and C108. Residue N90 is glycosylated (N-linked (GlcNAc...) asparagine). Residues 238–258 (ILTLLLTVGQGFTIVVLGVML) traverse the membrane as a helical segment. The Cytoplasmic segment spans residues 259 to 299 (WRQRAQGAQHRNASFPQFKPEIQVYENIHLAHLSPPAPKTR). Y283 bears the Phosphotyrosine mark.

In terms of assembly, homodimer; disulfide-linked. Interacts with GRB2 and GRB7 in a phosphorylation-dependent manner. Post-translationally, N-glycosylated.

It localises to the cell membrane. Functionally, may play a role in the downstream signal transduction pathways involving GRB2 and GRB7. This chain is Lymphocyte antigen 6 complex locus protein G6f (LY6G6F), found in Bos taurus (Bovine).